The chain runs to 519 residues: Ribonuclease Y 1 (519 aa).

The chain crosses the membrane as a helical span at residues 3–23; sequence VPIVILAIIAIVVGVVGGYYL. The span at 92–120 shows a compositional bias: basic and acidic residues; it reads QREETLDRKDNSLEKRENSLNRRDKKLSA. The tract at residues 92–124 is disordered; the sequence is QREETLDRKDNSLEKRENSLNRRDKKLSAEEQN. Residues 209–272 form the KH domain; it reads TITVVTLPND…EVAKIALEKL (64 aa). An HD domain is found at 335–428; that stretch reads ALAHSIEVAK…VSTADIISAT (94 aa).

The protein belongs to the RNase Y family.

Its subcellular location is the cell membrane. Its function is as follows. Endoribonuclease that initiates mRNA decay. The protein is Ribonuclease Y 1 of Levilactobacillus brevis (strain ATCC 367 / BCRC 12310 / CIP 105137 / JCM 1170 / LMG 11437 / NCIMB 947 / NCTC 947) (Lactobacillus brevis).